The following is a 529-amino-acid chain: GMP synthase [glutamine-hydrolyzing] (529 aa).

One can recognise a Glutamine amidotransferase type-1 domain in the interval 3–204; the sequence is TVAIVDFGSQ…FLKIAGCTRD (202 aa). The Nucleophile role is filled by Cys87. Catalysis depends on residues His179 and Glu181. A GMPS ATP-PPase domain is found at 205–395; that stretch reads WTMGSFLHTQ…LGLPSAILDR (191 aa). An ATP-binding site is contributed by 232–238; the sequence is SGGVDSS.

Homodimer.

The enzyme catalyses XMP + L-glutamine + ATP + H2O = GMP + L-glutamate + AMP + diphosphate + 2 H(+). The protein operates within purine metabolism; GMP biosynthesis; GMP from XMP (L-Gln route): step 1/1. Its function is as follows. Catalyzes the synthesis of GMP from XMP. This chain is GMP synthase [glutamine-hydrolyzing], found in Anaplasma marginale (strain St. Maries).